The following is a 542-amino-acid chain: Beta-fructofuranosidase, insoluble isoenzyme 5 (542 aa).

Substrate-binding positions include 50-53, Gln-69, Trp-77, and 114-115; these read WQND and WS. Residue Asp-53 is part of the active site. Asn-142 carries an N-linked (GlcNAc...) asparagine glycan. Residues 178 to 179 and Glu-233 each bind substrate; that span reads RD. A disulfide bridge links Cys-389 with Cys-436. N-linked (GlcNAc...) asparagine glycans are attached at residues Asn-510 and Asn-516.

It belongs to the glycosyl hydrolase 32 family. In terms of tissue distribution, expressed in roots and leaves.

It localises to the secreted. Its subcellular location is the extracellular space. It is found in the apoplast. The protein resides in the cell wall. It carries out the reaction Hydrolysis of terminal non-reducing beta-D-fructofuranoside residues in beta-D-fructofuranosides.. Its function is as follows. May play a role in stress response. In Oryza sativa subsp. japonica (Rice), this protein is Beta-fructofuranosidase, insoluble isoenzyme 5 (CIN5).